A 655-amino-acid polypeptide reads, in one-letter code: Broad substrate specificity ATP-binding cassette transporter ABCG2 (655 aa).

Topologically, residues 1–395 (MSSSNVEVFI…KNLLGNPQAS (395 aa)) are cytoplasmic. An ABC transporter domain is found at 37–286 (LSFHNICYRV…FESAGYHCEA (250 aa)). ATP is bound by residues 80–87 (GPTGGGKS), 184–190 (RGVSGGE), Glu-211, and His-243. Phosphothreonine; by PIM1 is present on Thr-362. The 263-residue stretch at 389 to 651 (LGNPQASIAQ…TIAYLKLLFL (263 aa)) folds into the ABC transmembrane type-2 domain. A helical transmembrane segment spans residues 396–416 (IAQIIVTVVLGLVIGAIYFGL). The Extracellular segment spans residues 417–428 (KNDSTGIQNRAG). Residues 429–449 (VLFFLTTNQCFSSVSAVELFV) form a helical membrane-spanning segment. The Cytoplasmic portion of the chain corresponds to 450 to 477 (VEKKLFIHEYISGYYRVSSYFLGKLLSD). A helical membrane pass occupies residues 478–498 (LLPMRMLPSIIFTCIVYFMLG). The Extracellular portion of the chain corresponds to 499–506 (LKPKADAF). Residues 507 to 527 (FVMMFTLMMVAYSASSMALAI) form a helical membrane-spanning segment. At 528–535 (AAGQSVVS) the chain is on the cytoplasmic side. The helical transmembrane segment at 536-556 (VATLLMTICFVFMMIFSGLLV) threads the bilayer. At 557–630 (NLTTIASWLS…LSPWGLWKNH (74 aa)) the chain is on the extracellular side. A disulfide bridge connects residues Cys-592 and Cys-608. N-linked (GlcNAc...) asparagine glycosylation occurs at Asn-596. Residues 631–651 (VALACMIVIFLTIAYLKLLFL) form a helical membrane-spanning segment. Over 652 to 655 (KKYS) the chain is Cytoplasmic.

The protein belongs to the ABC transporter superfamily. ABCG family. Eye pigment precursor importer (TC 3.A.1.204) subfamily. In terms of assembly, homodimer; disulfide-linked. The minimal functional unit is a homodimer, but the major oligomeric form in plasma membrane is a homotetramer with possibility of higher order oligomerization up to homododecamers. Post-translationally, N-glycosylated. Glycosylation-deficient ABCG2 is normally expressed and functional. Phosphorylated. Phosphorylation at Thr-362 by PIM1 is induced by drugs like mitoxantrone and is associated with cells increased drug resistance. It regulates the localization to the plasma membrane, the homooligomerization and therefore, the activity of the transporter. As to expression, highly expressed in placenta. Low expression in small intestine, liver and colon. Expressed in brain (at protein level).

It is found in the cell membrane. The protein resides in the apical cell membrane. The protein localises to the mitochondrion membrane. The enzyme catalyses ATP + H2O + xenobioticSide 1 = ADP + phosphate + xenobioticSide 2.. It catalyses the reaction urate(in) + ATP + H2O = urate(out) + ADP + phosphate + H(+). The catalysed reaction is indoxyl sulfate(in) + ATP + H2O = indoxyl sulfate(out) + ADP + phosphate + H(+). It carries out the reaction sphing-4-enine 1-phosphate(in) + ATP + H2O = sphing-4-enine 1-phosphate(out) + ADP + phosphate + H(+). The enzyme catalyses estrone 3-sulfate(in) + ATP + H2O = estrone 3-sulfate(out) + ADP + phosphate + H(+). It catalyses the reaction dehydroepiandrosterone 3-sulfate(in) + ATP + H2O = dehydroepiandrosterone 3-sulfate(out) + ADP + phosphate + H(+). The catalysed reaction is 4-methylumbelliferone sulfate(in) + ATP + H2O = 4-methylumbelliferone sulfate(out) + ADP + phosphate + H(+). It carries out the reaction 5,7-dimethyl-2-methylamino-4-(3-pyridylmethyl)-1,3-benzothiazol-6-yl beta-D-glucuronate(in) + ATP + H2O = 5,7-dimethyl-2-methylamino-4-(3-pyridylmethyl)-1,3-benzothiazol-6-yl beta-D-glucuronate(out) + ADP + phosphate + H(+). The enzyme catalyses 4-methylumbelliferone beta-D-glucuronate(in) + ATP + H2O = 4-methylumbelliferone beta-D-glucuronate(out) + ADP + phosphate + H(+). It catalyses the reaction 5,7-dimethyl-2-methylamino-4-(3-pyridylmethyl)-1,3-benzothiazol-6-yl sulfate(in) + ATP + H2O = 5,7-dimethyl-2-methylamino-4-(3-pyridylmethyl)-1,3-benzothiazol-6-yl sulfate(out) + ADP + phosphate + H(+). The catalysed reaction is 17beta-estradiol 17-O-(beta-D-glucuronate)(in) + ATP + H2O = 17beta-estradiol 17-O-(beta-D-glucuronate)(out) + ADP + phosphate + H(+). It carries out the reaction methotrexate(in) + ATP + H2O = methotrexate(out) + ADP + phosphate + H(+). The enzyme catalyses riboflavin(in) + ATP + H2O = riboflavin(out) + ADP + phosphate + H(+). It catalyses the reaction pheophorbide a(in) + ATP + H2O = pheophorbide a(out) + ADP + phosphate + H(+). The catalysed reaction is itaconate(in) + ATP + H2O = itaconate(out) + ADP + phosphate + H(+). Specifically inhibited by the fungal toxin fumitremorgin C and Ko143. In terms of biological role, broad substrate specificity ATP-dependent transporter of the ATP-binding cassette (ABC) family that actively extrudes a wide variety of physiological compounds, dietary toxins and xenobiotics from cells. Involved in porphyrin homeostasis, mediating the export of protoporphyrin IX (PPIX) from both mitochondria to cytosol and cytosol to extracellular space, it also functions in the cellular export of heme. Also mediates the efflux of sphingosine-1-P from cells. Acts as a urate exporter functioning in both renal and extrarenal urate excretion. In kidney, it also functions as a physiological exporter of the uremic toxin indoxyl sulfate. Also involved in the excretion of steroids like estrone 3-sulfate/E1S, 3beta-sulfooxy-androst-5-en-17-one/DHEAS, and other sulfate conjugates. Mediates the secretion of the riboflavin and biotin vitamins into milk. Extrudes pheophorbide a, a phototoxic porphyrin catabolite of chlorophyll, reducing its bioavailability. Plays an important role in the exclusion of xenobiotics from the brain. It confers to cells a resistance to multiple drugs and other xenobiotics including mitoxantrone, pheophorbide, camptothecin, methotrexate, azidothymidine, and the anthracyclines daunorubicin and doxorubicin, through the control of their efflux. In placenta, it limits the penetration of drugs from the maternal plasma into the fetus. May play a role in early stem cell self-renewal by blocking differentiation. In inflammatory macrophages, exports itaconate from the cytosol to the extracellular compartment and limits the activation of TFEB-dependent lysosome biogenesis involved in antibacterial innate immune response. This chain is Broad substrate specificity ATP-binding cassette transporter ABCG2 (ABCG2), found in Homo sapiens (Human).